Here is a 309-residue protein sequence, read N- to C-terminus: Homoserine kinase (309 aa).

91–101 (PIGSGLGSSAC) contributes to the ATP binding site.

Belongs to the GHMP kinase family. Homoserine kinase subfamily.

Its subcellular location is the cytoplasm. It catalyses the reaction L-homoserine + ATP = O-phospho-L-homoserine + ADP + H(+). It participates in amino-acid biosynthesis; L-threonine biosynthesis; L-threonine from L-aspartate: step 4/5. In terms of biological role, catalyzes the ATP-dependent phosphorylation of L-homoserine to L-homoserine phosphate. The protein is Homoserine kinase of Buchnera aphidicola subsp. Acyrthosiphon pisum (strain 5A).